Consider the following 255-residue polypeptide: Imidazole glycerol phosphate synthase subunit HisF (255 aa).

Active-site residues include Asp-13 and Asp-132.

This sequence belongs to the HisA/HisF family. Heterodimer of HisH and HisF.

The protein resides in the cytoplasm. The catalysed reaction is 5-[(5-phospho-1-deoxy-D-ribulos-1-ylimino)methylamino]-1-(5-phospho-beta-D-ribosyl)imidazole-4-carboxamide + L-glutamine = D-erythro-1-(imidazol-4-yl)glycerol 3-phosphate + 5-amino-1-(5-phospho-beta-D-ribosyl)imidazole-4-carboxamide + L-glutamate + H(+). Its pathway is amino-acid biosynthesis; L-histidine biosynthesis; L-histidine from 5-phospho-alpha-D-ribose 1-diphosphate: step 5/9. Functionally, IGPS catalyzes the conversion of PRFAR and glutamine to IGP, AICAR and glutamate. The HisF subunit catalyzes the cyclization activity that produces IGP and AICAR from PRFAR using the ammonia provided by the HisH subunit. The sequence is that of Imidazole glycerol phosphate synthase subunit HisF from Leptospira biflexa serovar Patoc (strain Patoc 1 / ATCC 23582 / Paris).